The following is a 334-amino-acid chain: NAD-dependent protein deacylase sirtuin-6 (334 aa).

At S2 the chain carries N-acetylserine. At S10 the chain carries Phosphoserine. In terms of domain architecture, Deacetylase sirtuin-type spans 27 to 272 (PEELERKVWE…CRLMKHLGLE (246 aa)). An N6-acetyllysine modification is found at K33. 7 residues coordinate NAD(+): A53, T57, F64, R65, W71, Q113, and H133. H133 functions as the Proton acceptor in the catalytic mechanism. Residues C141, C144, and C166 each contribute to the Zn(2+) site. K170 is covalently cross-linked (Glycyl lysine isopeptide (Lys-Gly) (interchain with G-Cter in ubiquitin)). A Zn(2+)-binding site is contributed by C177. Residues G214, S216, N240, Q242, and V258 each coordinate NAD(+). The interval 312–334 (KSKPNSPILHRPPKRVKTEAAPS) is disordered.

Belongs to the sirtuin family. Class IV subfamily. As to quaternary structure, homodimer; binds to nucleosomes and DNA ends as a homodimer. Interacts with RELA; interferes with RELA binding to target DNA. Interacts with SMARCA5; promoting recruitment of SMARCA5/SNF2H to double-strand breaks (DSBs) sites. Interacts with the mTORC2 complex; preventing the ability of SIRT6 to deacetylate FOXO1. Interacts with the CLOCK-BMAL1 complex; recruited by the CLOCK-BMAL1 complex to regulate expression of clock-controlled genes. Interacts with CSNK2A2; preventing CSNK2A2 localization to the nucleus. The cofactor is Zn(2+). In terms of processing, acetylated at Lys-33. Deacetylation at Lys-33 by SIRT1 promotes homomultimerization and binding to double-strand breaks (DSBs) sites. Phosphorylation at Ser-10 by MAPK8/JNK1 in response to oxidative stress stimulates the mono-ADP-ribosyltransferase activity on PARP1, leading to PARP1 recruitment to double-strand breaks (DSBs). Post-translationally, monoubiquitinated at Lys-170 by STUB1/CHIP, preventing its degradation by the proteasome. In terms of processing, sumoylated, leading to specifically decrease ability to deacetylate histone H3 at 'Lys-56' (H3K56ac). As to expression, highest levels are found in muscle, thymus, spleen, brain and heart (at protein level).

The protein resides in the nucleus. The protein localises to the chromosome. It localises to the telomere. It is found in the endoplasmic reticulum. The catalysed reaction is N(6)-acetyl-L-lysyl-[protein] + NAD(+) + H2O = 2''-O-acetyl-ADP-D-ribose + nicotinamide + L-lysyl-[protein]. It carries out the reaction N(6)-tetradecanoyl-L-lysyl-[protein] + NAD(+) + H2O = 2''-O-tetradecanoyl-ADP-D-ribose + nicotinamide + L-lysyl-[protein]. It catalyses the reaction N(6)-hexadecanoyl-L-lysyl-[protein] + NAD(+) + H2O = 2''-O-hexadecanoyl-ADP-D-ribose + nicotinamide + L-lysyl-[protein]. The enzyme catalyses L-lysyl-[protein] + NAD(+) = N(6)-(ADP-D-ribosyl)-L-lysyl-[protein] + nicotinamide + H(+). The catalysed reaction is L-arginyl-[protein] + NAD(+) = N(omega)-(ADP-D-ribosyl)-L-arginyl-[protein] + nicotinamide + H(+). With respect to regulation, compared to the defatty-acylase activity, the protein deacetylase activity is weak in vitro, and requires activation. The histone deacetylase activity is strongly activated upon binding to nucleosomes and chromatin in vivo. Two molecules of SIRT6 associate with the acidic patch of one nucleosome, while the C-terminal disordered region of SIRT6 associates with nucleosomal DNA, leading to efficient histone deacetylation. The protein-lysine deacetylase activity is also activated by long-chain free fatty-acids. NAD-dependent protein deacetylase, deacylase and mono-ADP-ribosyltransferase that plays an essential role in DNA damage repair, telomere maintenance, metabolic homeostasis, inflammation, tumorigenesis and aging. Displays protein-lysine deacetylase or defatty-acylase (demyristoylase and depalmitoylase) activity, depending on the context. Acts as a key histone deacetylase by catalyzing deacetylation of histone H3 at 'Lys-9', 'Lys-18' and 'Lys-56' (H3K9ac, H3K18ac and H3K56ac, respectively), suppressing target gene expression of several transcription factors, including NF-kappa-B. Acts as an inhibitor of transcription elongation by mediating deacetylation of H3K9ac and H3K56ac, preventing release of NELFE from chromatin and causing transcriptional pausing. Involved in DNA repair by promoting double-strand break (DSB) repair: acts as a DSB sensor by recognizing and binding DSB sites, leading to (1) recruitment of DNA repair proteins, such as SMARCA5/SNF2H, and (2) deacetylation of histone H3K9ac and H3K56ac. SIRT6 participation to DSB repair is probably involved in extension of life span. Also promotes DNA repair by deacetylating non-histone proteins, such as DDB2 and p53/TP53. Specifically deacetylates H3K18ac at pericentric heterochromatin, thereby maintaining pericentric heterochromatin silencing at centromeres and protecting against genomic instability and cellular senescence. Involved in telomere maintenance by catalyzing deacetylation of histone H3 in telomeric chromatin, regulating telomere position effect and telomere movement in response to DNA damage. Required for embryonic stem cell differentiation by mediating histone deacetylation of H3K9ac. Plays a major role in metabolism by regulating processes such as glycolysis, gluconeogenesis, insulin secretion and lipid metabolism. Inhibits glycolysis via histone deacetylase activity and by acting as a corepressor of the transcription factor HIF1A, thereby controlling the expression of multiple glycolytic genes. Has tumor suppressor activity by repressing glycolysis, thereby inhibiting the Warburg effect. Also regulates glycolysis and tumorigenesis by mediating deacetylation and nuclear export of non-histone proteins, such as isoform M2 of PKM (PKM2). Acts as a negative regulator of gluconeogenesis by mediating deacetylation of non-histone proteins, such as FOXO1 and KAT2A/GCN5. Promotes beta-oxidation of fatty acids during fasting by catalyzing deacetylation of NCOA2, inducing coactivation of PPARA. Acts as a regulator of lipid catabolism in brown adipocytes, both by catalyzing deacetylation of histones and non-histone proteins, such as FOXO1. Also acts as a regulator of circadian rhythms, both by regulating expression of clock-controlled genes involved in lipid and carbohydrate metabolism, and by catalyzing deacetylation of PER2. The defatty-acylase activity is specifically involved in regulation of protein secretion. Has high activity toward long-chain fatty acyl groups and mediates protein-lysine demyristoylation and depalmitoylation of target proteins, such as RRAS2 and TNF, thereby regulating their secretion. Also acts as a mono-ADP-ribosyltransferase by mediating mono-ADP-ribosylation of PARP1, TRIM28/KAP1 or SMARCC2/BAF170. Mono-ADP-ribosyltransferase activity is involved in DNA repair, cellular senescence, repression of LINE-1 retrotransposon elements and regulation of transcription. The protein is NAD-dependent protein deacylase sirtuin-6 of Mus musculus (Mouse).